Reading from the N-terminus, the 465-residue chain is Putative F-box/FBD/LRR-repeat protein At1g22000 (465 aa).

One can recognise an F-box domain in the interval Glu-28 to Lys-74. 5 LRR repeats span residues Cys-154–Tyr-181, Val-182–Ser-207, Asp-210–Glu-230, Asn-248–Glu-273, and Ile-339–Asn-365. The region spanning Ser-373–Leu-424 is the FBD domain.

This Arabidopsis thaliana (Mouse-ear cress) protein is Putative F-box/FBD/LRR-repeat protein At1g22000.